The chain runs to 223 residues: TMF-regulated nuclear protein 1 (223 aa).

Disordered regions lie at residues 1–84 (MPGC…GPAG) and 196–223 (GRLR…SPQR). Pro residues predominate over residues 21–54 (GSPPPPPREPLPSLQPPSPSPTSTPTPTKSPPLP). Residues 73–84 (ASGGSGGAGPAG) show a composition bias toward gly residues.

Interacts with TMF1; may regulate TRNP1 proteasomal degradation. In terms of processing, ubiquitinated, leading to its degradation by the proteasome. Expressed in brain and kidney (at protein level). Also detected in spleen and intestine.

The protein localises to the nucleus. In terms of biological role, DNA-binding factor that regulates the expression of a subset of genes and plays a key role in tangential, radial, and lateral expansion of the brain neocortex. Regulates neural stem cells proliferation and the production of intermediate neural progenitors and basal radial glial cells affecting the process of cerebral cortex gyrification. May control the proliferation rate of cells by regulating their progression through key cell-cycle transition points. This is TMF-regulated nuclear protein 1 (Trnp1) from Mus musculus (Mouse).